A 581-amino-acid polypeptide reads, in one-letter code: MKSHIQSLLEQTIESFKQQGILPADFEARIQVDRTKDKSHGDLATNLAMMLTKAAGKNPRELAQLIIDNLPASNYVAKVEIAGPGFINFFIDDSALANQLQAAISDEHLGIKLPTPQTIVVDYSSPNLAKEMHVGHLRSTIIGDSVVRTLEFLGHKVIRQNHVGDWGTQFGMLLAYMEELRAQNGEQAQLELSDLETFYRAAKLRFDESAEFATRARQLVVELQSGDEYCNKLWREFNDISLSHCHEVYERLGVSLTRADVHGESAYNADLEQVVKDLDAQGLLTQSNGAKVVFQEEFRNKEGEALPVIIQKADGGYLYATTDLAAMRYRSSVLKADRVLYFVDLRQALHFQQVFSLAKLAKFVRNDMSLEHLGFGTMNGEDGRPFKTRTGGVVKLVDLLDEANTRALELVRSKNPDMDEATLAEIARVVGISAVKYADLSKNRTSDYIFSFEQMLSFEGNTAPYLLYAYTRVAGIFKRATDIDLSQAKIVLEHEKEKDLGNKLAQFGEILSRVVDKGQPHVLCGYLYELAGAFSSFYEACPVLAADNDEQKHSRLLLSQLTANTLQKGLNLLGIETLERM.

Residues 126–136 (PNLAKEMHVGH) carry the 'HIGH' region motif.

The protein belongs to the class-I aminoacyl-tRNA synthetase family. Monomer.

The protein resides in the cytoplasm. It carries out the reaction tRNA(Arg) + L-arginine + ATP = L-arginyl-tRNA(Arg) + AMP + diphosphate. The polypeptide is Arginine--tRNA ligase (Shewanella sp. (strain ANA-3)).